Reading from the N-terminus, the 354-residue chain is Guanine nucleotide-binding protein G(o) subunit alpha (354 aa).

Residue G2 is the site of N-myristoyl glycine attachment. Residue C3 is the site of S-palmitoyl cysteine attachment. In terms of domain architecture, G-alpha spans 32 to 354 (KDVKLLLLGA…ANNLRGCGLY (323 aa)). Residues 35–48 (KLLLLGAGESGKST) form a G1 motif region. Residues E43, K46, S47, T48, S152, L176, R177, T178, and R179 each coordinate GTP. S47 serves as a coordination point for Mg(2+). Residues 174 to 182 (DILRTRVKT) are G2 motif. R179 is subject to ADP-ribosylarginine; by cholera toxin. Residue T182 coordinates Mg(2+). The interval 197–206 (FRLFDVGGQR) is G3 motif. The residue at position 205 (Q205) is a 5-glutamyl histamine. The interval 266–273 (ILFLNKKD) is G4 motif. Residues N270, D273, and C325 each contribute to the GTP site. The G5 motif stretch occupies residues 324-329 (TCATDT). C351 carries S-palmitoyl cysteine lipidation. C351 is subject to ADP-ribosylcysteine; by pertussis toxin.

This sequence belongs to the G-alpha family. G(i/o/t/z) subfamily. As to quaternary structure, g proteins are composed of 3 units; alpha, beta and gamma. The alpha chain contains the guanine nucleotide binding site. Forms a complex with GNB1 and GNG3. Interacts with RGS14. Interacts with RGS16. Interacts with RGS19. Interacts (when palmitoylated) with ADGRG3. Histaminylated at Gln-205 residues by TGM2. Post-translationally, palmitoylated at Cys-351, leading to binding to ADGRG3.

The protein resides in the cell membrane. It localises to the membrane. The catalysed reaction is GTP + H2O = GDP + phosphate + H(+). Its activity is regulated as follows. The GTPase activity is promoted by GTPAse activators, such as RGS14, RGS16 and RGS19. Its function is as follows. Guanine nucleotide-binding proteins (G proteins) function as transducers downstream of G protein-coupled receptors (GPCRs) in numerous signaling cascades. The alpha chain contains the guanine nucleotide binding site and alternates between an active, GTP-bound state and an inactive, GDP-bound state. Signaling by an activated GPCR promotes GDP release and GTP binding. The alpha subunit has a low GTPase activity that converts bound GTP to GDP, thereby terminating the signal. Both GDP release and GTP hydrolysis are modulated by numerous regulatory proteins. Signaling is mediated via effector proteins, such as adenylate cyclase. Inhibits adenylate cyclase activity, leading to decreased intracellular cAMP levels. In Homo sapiens (Human), this protein is Guanine nucleotide-binding protein G(o) subunit alpha (GNAO1).